The chain runs to 620 residues: Ran-binding protein 10 (620 aa).

Residues 1–41 (MAAATADPGAGNPQPGDSSGGGAGGGLPSPGEQELSRRLQR) form a disordered region. The residue at position 2 (alanine 2) is an N-acetylalanine. Over residues 18-28 (SSGGGAGGGLP) the composition is skewed to gly residues. The region spanning 35–222 (LSRRLQRLYP…VDANFGQQPF (188 aa)) is the B30.2/SPRY domain. The region spanning 253–285 (WQAVLQNMVSSYLVHHGYCATATAFARMTETPI) is the LisH domain. The CTLH domain maps to 291–348 (SIKNRQKIQKLVLEGRVGEAIETTQRFYPGLLEHNPNLLFMLKCRQFVEMVNGTDSEV). Positions 347–398 (EVRSLSSRSPKSQDSYPGSPSLSPRHGPSSSHMHNTGADSPSCSNGVASTKS) are enriched in polar residues. The segment at 347–458 (EVRSLSSRSP…ETSDSEMEME (112 aa)) is disordered. The residue at position 361 (serine 361) is a Phosphoserine. Tyrosine 362 bears the Phosphotyrosine mark. Phosphoserine occurs at positions 365, 367, 369, 422, 451, and 453. The span at 409-436 (SSSSSSSSSSSSSSPSSVNYSESNSTDS) shows a compositional bias: low complexity.

Belongs to the RANBP9/10 family. May form homodimers. Identified in the CTLH complex that contains GID4, RANBP9 and/or RANBP10, MKLN1, MAEA, RMND5A (or alternatively its paralog RMND5B), GID8, ARMC8, WDR26 and YPEL5. Within this complex, MAEA, RMND5A (or alternatively its paralog RMND5B), GID8, WDR26, and RANBP9 and/or RANBP10 form the catalytic core, while GID4, MKLN1, ARMC8 and YPEL5 have ancillary roles. Interacts with RAN and RANBP9. Interacts with the HGF receptor MET. Interacts with AR. Interacts with TUBB1. Interacts with YPEL5. May interact with TUBB5. Interacts with DDX4. As to expression, broadly expressed, with highest levels in skeletal muscle.

The protein resides in the cytoplasm. The protein localises to the cytosol. It localises to the nucleus. Its function is as follows. May act as an adapter protein to couple membrane receptors to intracellular signaling pathways. Core component of the CTLH E3 ubiquitin-protein ligase complex that selectively accepts ubiquitin from UBE2H and mediates ubiquitination and subsequent proteasomal degradation of the transcription factor HBP1. Enhances dihydrotestosterone-induced transactivation activity of AR, as well as dexamethasone-induced transactivation activity of NR3C1, but does not affect estrogen-induced transactivation. Acts as a guanine nucleotide exchange factor (GEF) for RAN GTPase. May play an essential role in hemostasis and in maintaining microtubule dynamics with respect to both platelet shape and function. This chain is Ran-binding protein 10 (RANBP10), found in Homo sapiens (Human).